We begin with the raw amino-acid sequence, 625 residues long: MNFQENYDVIVIGGGHAGVEASLAAARMGSKTLLMTINLNMVAFMPCNPSIGGSAKGIVVREIDALGGEMGRNIDKTYIQMKMLNTGKGPAVRALRAQADKDEYAASMKNTVSDQENLTLRQGMVEELILDDEKQKVIGVRTSTGTQYGAKAVIITTGTALRGEIIIGELKYSSGPNNSLSSIGLADNLREIGFEIGRFKTGTPPRVLASSIDYDKTEIQPGDEAPNHFSFMSSDEDYLKDQIPCWLTYTTENSHTILRDNLHRAPLFSGIVKGVGPRYCPSIEDKITRFADKPRHQLFLEPEGRNTEEVYIGGLSTSMPEDVQFDLVKSIPGLENAKMMRPGYAIEYDVVMPHQLRPTLETKLISGLFTAGQTNGTSGYEEAAGQGLVAGINAALKIQGKPEFILKRSEAYIGVMIDDLVTKGTLEPYRLLTSRAEYRLILRHDNADRRLTEIGRQVGLVSDAQWEHYQAKMAQFDREMKRLNSEKLKPLPDTQEKLGKLGFGPIKDALTGAEFLKRPEVNYDEVIDFIGQAPEVIDRTVIELIETEITYEGYIKKAMDQVDKMHRLEAKRIPKNMDWDKLDSIATEARQKFKKINPETLGQASRISGVNPADISILMVYLEGK.

Residues 13-18 (GGGHAG), valine 125, and serine 182 each bind FAD. 276 to 290 (GPRYCPSIEDKITRF) serves as a coordination point for NAD(+). Glutamine 373 contacts FAD.

This sequence belongs to the MnmG family. As to quaternary structure, homodimer. Heterotetramer of two MnmE and two MnmG subunits. FAD serves as cofactor.

Its subcellular location is the cytoplasm. Its function is as follows. NAD-binding protein involved in the addition of a carboxymethylaminomethyl (cmnm) group at the wobble position (U34) of certain tRNAs, forming tRNA-cmnm(5)s(2)U34. The protein is tRNA uridine 5-carboxymethylaminomethyl modification enzyme MnmG of Lactococcus lactis subsp. cremoris (strain MG1363).